We begin with the raw amino-acid sequence, 444 residues long: ATP-dependent protease ATPase subunit HslU (444 aa).

ATP contacts are provided by residues isoleucine 20, 62 to 67, aspartate 257, glutamate 322, and arginine 394; that span reads GVGKTE.

This sequence belongs to the ClpX chaperone family. HslU subfamily. As to quaternary structure, a double ring-shaped homohexamer of HslV is capped on each side by a ring-shaped HslU homohexamer. The assembly of the HslU/HslV complex is dependent on binding of ATP.

The protein resides in the cytoplasm. ATPase subunit of a proteasome-like degradation complex; this subunit has chaperone activity. The binding of ATP and its subsequent hydrolysis by HslU are essential for unfolding of protein substrates subsequently hydrolyzed by HslV. HslU recognizes the N-terminal part of its protein substrates and unfolds these before they are guided to HslV for hydrolysis. The protein is ATP-dependent protease ATPase subunit HslU of Bordetella avium (strain 197N).